The sequence spans 245 residues: MIIPAIDLIDGKVVRLYQGDYGQQTTFDLSPQAQLQSYQDQGANWLHIVDLTGAKEPAKRQTTLIAELTAGLSANIQVGGGIRTEEQVAELLSLGVKRVVIGSLAVKEPELVKGWFNKFGSEAICLALDININQSGEKIVAVSGWQSGGGKSLESIVEDFSQVGLKHALVTDISRDGTLTGANTELYRELSSRYPDIAWQASGGIATLEDVAAVRDSGAAGIIIGKALLINQFNVAEAIQCWPNE.

The active-site Proton acceptor is the Asp-7. Asp-129 serves as the catalytic Proton donor.

This sequence belongs to the HisA/HisF family.

Its subcellular location is the cytoplasm. The catalysed reaction is 1-(5-phospho-beta-D-ribosyl)-5-[(5-phospho-beta-D-ribosylamino)methylideneamino]imidazole-4-carboxamide = 5-[(5-phospho-1-deoxy-D-ribulos-1-ylimino)methylamino]-1-(5-phospho-beta-D-ribosyl)imidazole-4-carboxamide. The protein operates within amino-acid biosynthesis; L-histidine biosynthesis; L-histidine from 5-phospho-alpha-D-ribose 1-diphosphate: step 4/9. This Shewanella sp. (strain MR-7) protein is 1-(5-phosphoribosyl)-5-[(5-phosphoribosylamino)methylideneamino] imidazole-4-carboxamide isomerase.